A 395-amino-acid chain; its full sequence is Formate-dependent phosphoribosylglycinamide formyltransferase (395 aa).

N(1)-(5-phospho-beta-D-ribosyl)glycinamide is bound by residues 22 to 23 (EL) and E82. ATP-binding positions include R115, K156, 161 to 166 (SSGKGQ), 196 to 199 (EGFI), and E204. An ATP-grasp domain is found at 120 to 309 (RLAAETLGLP…EFALHARAIL (190 aa)). Positions 268 and 280 each coordinate Mg(2+). Residues D287, K356, and 363 to 364 (RR) contribute to the N(1)-(5-phospho-beta-D-ribosyl)glycinamide site.

The protein belongs to the PurK/PurT family. As to quaternary structure, homodimer.

The catalysed reaction is N(1)-(5-phospho-beta-D-ribosyl)glycinamide + formate + ATP = N(2)-formyl-N(1)-(5-phospho-beta-D-ribosyl)glycinamide + ADP + phosphate + H(+). It functions in the pathway purine metabolism; IMP biosynthesis via de novo pathway; N(2)-formyl-N(1)-(5-phospho-D-ribosyl)glycinamide from N(1)-(5-phospho-D-ribosyl)glycinamide (formate route): step 1/1. In terms of biological role, involved in the de novo purine biosynthesis. Catalyzes the transfer of formate to 5-phospho-ribosyl-glycinamide (GAR), producing 5-phospho-ribosyl-N-formylglycinamide (FGAR). Formate is provided by PurU via hydrolysis of 10-formyl-tetrahydrofolate. The sequence is that of Formate-dependent phosphoribosylglycinamide formyltransferase from Stenotrophomonas maltophilia (strain K279a).